Reading from the N-terminus, the 505-residue chain is Calcium/calmodulin-dependent protein kinase kinase 1 (505 aa).

The disordered stretch occupies residues 26–61 (THLEEADGGPEPTRNGVDPPPRARAASVIPGSTSRL). Phosphoserine is present on residues Ser-67 and Ser-74. Residue Arg-78 is modified to Asymmetric dimethylarginine. Ser-100 is modified (phosphoserine). Thr-108 bears the Phosphothreonine mark. In terms of domain architecture, Protein kinase spans 128–409 (YKLQSEIGKG…VPDIKLHPWV (282 aa)). ATP-binding positions include 134–142 (IGKGAYGVV) and Lys-157. Residues 167-189 (QYGFPRRPPPRGSQAAQGGPAKQ) form an RP domain region. Catalysis depends on Asp-275, which acts as the Proton acceptor. The segment at 435–440 (KNSVRL) is autoinhibitory domain. The tract at residues 438-463 (VRLIPSWTTVILVKSMLRKRSFGNPF) is calmodulin-binding. Residues Ser-458, Ser-475, and Ser-492 each carry the phosphoserine modification. Residues 460-505 (GNPFEPQARREERSMSAPGNLLVKEGFGEGGKSPELPGVQEDEAAS) are disordered.

The protein belongs to the protein kinase superfamily. Ser/Thr protein kinase family. As to quaternary structure, interacts with CAMK4 and calmodulin. Post-translationally, appears to be autophosphorylated in a Ca(2+)/calmodulin-dependent manner. Phosphorylated at multiple sites by PRCAKA/PKA. Phosphorylation of Ser-458 is blocked upon binding to Ca(2+)/calmodulin. In vitro, phosphorylated by CAMK1 and CAMK4.

The protein localises to the cytoplasm. It is found in the nucleus. It carries out the reaction L-seryl-[protein] + ATP = O-phospho-L-seryl-[protein] + ADP + H(+). The catalysed reaction is L-threonyl-[protein] + ATP = O-phospho-L-threonyl-[protein] + ADP + H(+). With respect to regulation, activated by Ca(2+)/calmodulin. Binding of calmodulin may relieve intrasteric autoinhibition. Partially inhibited upon phosphorylation by PRCAKA/PKA. May be regulated through phosphorylation by CAMK1 and CAMK4. Calcium/calmodulin-dependent protein kinase that belongs to a proposed calcium-triggered signaling cascade involved in a number of cellular processes. Phosphorylates CAMK1, CAMK1D, CAMK1G and CAMK4. Involved in regulating cell apoptosis. Promotes cell survival by phosphorylating AKT1/PKB that inhibits pro-apoptotic BAD/Bcl2-antagonist of cell death. The polypeptide is Calcium/calmodulin-dependent protein kinase kinase 1 (CAMKK1) (Homo sapiens (Human)).